Reading from the N-terminus, the 338-residue chain is Heat-inducible transcription repressor HrcA (338 aa).

It belongs to the HrcA family.

In terms of biological role, negative regulator of class I heat shock genes (grpE-dnaK-dnaJ and groELS operons). Prevents heat-shock induction of these operons. The sequence is that of Heat-inducible transcription repressor HrcA from Bacillus cereus (strain B4264).